Consider the following 133-residue polypeptide: Hexon-interlacing protein (133 aa).

Residues 97–127 (REEDALSVVLTRMEELSQQLQDLFAKVALLN) adopt a coiled-coil conformation.

It belongs to the adenoviridae hexon-interlacing protein family. In terms of assembly, homotrimer. Interacts with hexon protein; this interaction tethers the hexons together. Self-interacts with adjacent proteins. Interacts with kinesin light chain KLC1; this interaction leads to capsid disruption at the nuclear pore complex during virus entry into host cell.

The protein resides in the virion. Its subcellular location is the host nucleus. Its function is as follows. Structural component of the virion that acts as a cement protein on the capsid exterior and forms triskelion structures consisting of three molecules that stabilize three hexon trimers at the center of each icosahedral facet and fixes the peripentonal hexons. Dispensable for assembly. During virus entry, recruits the anterograde motor kinesin-1 to the capsid docked at the nuclear pore complex thereby subjecting the docked capsid to a pulling force. The resulting tension leads to capsid disruption, dispersion of capsid fragments toward cell periphery and eventually viral DNA entry into the host nucleus. The protein is Hexon-interlacing protein of Homo sapiens (Human).